A 328-amino-acid polypeptide reads, in one-letter code: Carbonic anhydrase, chloroplastic (328 aa).

Positions 1–15 are enriched in low complexity; it reads MSTSSINGFSLSSLS. Residues 1 to 26 are disordered; that stretch reads MSTSSINGFSLSSLSPAKTSTKRTTL. A chloroplast-targeting transit peptide spans 1–70; that stretch reads MSTSSINGFS…IITPVLREEM (70 aa).

The protein belongs to the beta-class carbonic anhydrase family. In terms of assembly, homohexamer.

It localises to the plastid. It is found in the chloroplast stroma. It catalyses the reaction hydrogencarbonate + H(+) = CO2 + H2O. Reversible hydration of carbon dioxide. In Pisum sativum (Garden pea), this protein is Carbonic anhydrase, chloroplastic.